We begin with the raw amino-acid sequence, 688 residues long: Glycine--tRNA ligase beta subunit (688 aa).

This sequence belongs to the class-II aminoacyl-tRNA synthetase family. Tetramer of two alpha and two beta subunits.

Its subcellular location is the cytoplasm. It carries out the reaction tRNA(Gly) + glycine + ATP = glycyl-tRNA(Gly) + AMP + diphosphate. This chain is Glycine--tRNA ligase beta subunit, found in Shewanella sp. (strain MR-7).